The chain runs to 154 residues: 6,7-dimethyl-8-ribityllumazine synthase (154 aa).

5-amino-6-(D-ribitylamino)uracil contacts are provided by residues Phe23, 57 to 59 (AFE), and 81 to 83 (AVI). 86-87 (AT) lines the (2S)-2-hydroxy-3-oxobutyl phosphate pocket. The active-site Proton donor is His89. Phe114 contributes to the 5-amino-6-(D-ribitylamino)uracil binding site. Residue Arg128 coordinates (2S)-2-hydroxy-3-oxobutyl phosphate.

This sequence belongs to the DMRL synthase family.

The enzyme catalyses (2S)-2-hydroxy-3-oxobutyl phosphate + 5-amino-6-(D-ribitylamino)uracil = 6,7-dimethyl-8-(1-D-ribityl)lumazine + phosphate + 2 H2O + H(+). It functions in the pathway cofactor biosynthesis; riboflavin biosynthesis; riboflavin from 2-hydroxy-3-oxobutyl phosphate and 5-amino-6-(D-ribitylamino)uracil: step 1/2. In terms of biological role, catalyzes the formation of 6,7-dimethyl-8-ribityllumazine by condensation of 5-amino-6-(D-ribitylamino)uracil with 3,4-dihydroxy-2-butanone 4-phosphate. This is the penultimate step in the biosynthesis of riboflavin. In Syntrophus aciditrophicus (strain SB), this protein is 6,7-dimethyl-8-ribityllumazine synthase.